The primary structure comprises 69 residues: Putative membrane protein insertion efficiency factor (69 aa).

It belongs to the UPF0161 family.

It is found in the cell inner membrane. Its function is as follows. Could be involved in insertion of integral membrane proteins into the membrane. This is Putative membrane protein insertion efficiency factor from Nitrosomonas eutropha (strain DSM 101675 / C91 / Nm57).